The following is a 224-amino-acid chain: MTGEHKRSSLIKRITNETKIQIALSLDGGPVSLAQSLFKDKDYSAEHAAQATSSQFISVNTGIGFLDHMLHALAKHGGWSVIIECVGDLHIDDHHSAEDTGIALGMAFKEALGHVRGIKRFGSGFAPLDEALSRAVIDMSNRPYAVVDLGLKREKIGDLSCEMIPHVLESFAQGAHVTMHVDCLRGFNDHHRAESAFKALAIAIKEAISSNGTDDIPSTKGVLF.

Belongs to the imidazoleglycerol-phosphate dehydratase family.

It catalyses the reaction D-erythro-1-(imidazol-4-yl)glycerol 3-phosphate = 3-(imidazol-4-yl)-2-oxopropyl phosphate + H2O. The protein operates within amino-acid biosynthesis; L-histidine biosynthesis; L-histidine from 5-phospho-alpha-D-ribose 1-diphosphate: step 6/9. This is Imidazoleglycerol-phosphate dehydratase (HIS3) from Komagataella pastoris (Yeast).